The following is a 309-amino-acid chain: Mannitol-1-phosphatase (309 aa).

The active-site Tele-phosphohistidine intermediate is His82. Residue Glu166 is the Proton donor/acceptor of the active site.

The protein belongs to the phosphoglycerate mutase family.

The enzyme catalyses D-mannitol 1-phosphate + H2O = D-mannitol + phosphate. Its activity is regulated as follows. By diethyl pyrocarbonate (DEPC). In terms of biological role, key enzyme for mannitol biosynthesis. The sequence is that of Mannitol-1-phosphatase from Eimeria tenella (Coccidian parasite).